The following is a 426-amino-acid chain: LIM/homeobox protein Lhx2 (426 aa).

The span at 14-24 shows a compositional bias: basic and acidic residues; that stretch reads VIDEMDRRQER. Positions 14-42 are disordered; that stretch reads VIDEMDRRQERGSGISSAIDRGDTETTMP. 2 consecutive LIM zinc-binding domains span residues 52 to 104 and 114 to 167; these read CAGC…CKED and CARC…CRLH. Residues 248–268 are disordered; sequence DAEHLDRDQPYPSSQKTKRMR. The homeobox DNA-binding region spans 264-323; the sequence is TKRMRTSFKHHQLRTMKSYFAINHNPDAKDLKQLAQKTGLTKRVLQVWFQNARAKFRRNL. A Nuclear localization signal motif is present at residues 305 to 321; sequence KRVLQVWFQNARAKFRR. A compositionally biased stretch (polar residues) spans 326–354; the sequence is QENTGVDKTSDATLQTGTPSGPASELSNA. The interval 326–370 is disordered; the sequence is QENTGVDKTSDATLQTGTPSGPASELSNASLSPSSTPTTLTDLTS. Over residues 355 to 370 the composition is skewed to low complexity; it reads SLSPSSTPTTLTDLTS.

As to quaternary structure, interacts (via LIM domains) with CITED2. Interacts with POU4F2. Found in discrete regions of the developing CNS, primarily in diencephalic and telencephalic structures and a subset of lymphoid tissues. Also found in embryonic spinal cord and fetal liver.

The protein localises to the nucleus. Functionally, acts as a transcriptional activator. Stimulates the promoter of the alpha-glycoprotein gene. Transcriptional regulatory protein involved in the control of cell differentiation in developing lymphoid and neural cell types. The polypeptide is LIM/homeobox protein Lhx2 (Lhx2) (Rattus norvegicus (Rat)).